The primary structure comprises 534 residues: Glucans biosynthesis protein D (534 aa).

Residues 1-28 (MYRRDFLKSVTAAWVAFGLPNPLGGAFA) constitute a signal peptide (tat-type signal).

This sequence belongs to the OpgD/OpgG family. Predicted to be exported by the Tat system. The position of the signal peptide cleavage has not been experimentally proven.

The protein localises to the periplasm. Its pathway is glycan metabolism; osmoregulated periplasmic glucan (OPG) biosynthesis. Its function is as follows. Probably involved in the control of the structural glucose backbone of osmoregulated periplasmic glucans (OPGs). The protein is Glucans biosynthesis protein D of Xylella fastidiosa (strain M23).